The chain runs to 180 residues: Large ribosomal subunit protein uL6 (180 aa).

Belongs to the universal ribosomal protein uL6 family. As to quaternary structure, part of the 50S ribosomal subunit.

Functionally, this protein binds to the 23S rRNA, and is important in its secondary structure. It is located near the subunit interface in the base of the L7/L12 stalk, and near the tRNA binding site of the peptidyltransferase center. The chain is Large ribosomal subunit protein uL6 from Prosthecochloris aestuarii (strain DSM 271 / SK 413).